Here is a 289-residue protein sequence, read N- to C-terminus: Eukaryotic translation initiation factor 3 subunit G (289 aa).

Disordered stretches follow at residues 1–31 and 151–199; these read MSRL…VISN and DTMA…GEKM. The RRM domain maps to 209–287; sequence ATLRVTNVSE…LILRVEFAKK (79 aa).

It belongs to the eIF-3 subunit G family. Component of the eukaryotic translation initiation factor 3 (eIF-3) complex.

The protein resides in the cytoplasm. Functionally, RNA-binding component of the eukaryotic translation initiation factor 3 (eIF-3) complex, which is involved in protein synthesis of a specialized repertoire of mRNAs and, together with other initiation factors, stimulates binding of mRNA and methionyl-tRNAi to the 40S ribosome. The eIF-3 complex specifically targets and initiates translation of a subset of mRNAs involved in cell proliferation. This subunit can bind 18S rRNA. The polypeptide is Eukaryotic translation initiation factor 3 subunit G (Coccidioides immitis (strain RS) (Valley fever fungus)).